A 196-amino-acid polypeptide reads, in one-letter code: Agamous-like MADS-box protein AGL27 (196 aa).

The 61-residue stretch at Met1–Asp61 folds into the MADS-box domain. In terms of domain architecture, K-box spans Ala80–Leu170. The tract at residues Glu175–Asn196 is disordered.

Interacts with AGL39, AGL97 and AGL74. In terms of tissue distribution, expressed in most plant tissues, embryo, seedlings, roots, leaves, stems, inflorescence, pollen, siliques and flowers.

It localises to the nucleus. Probable transcription factor involved in the negative regulation of flowering time in both long and short days, probably through the photoperiodic and vernalization pathways. Prevents premature flowering. This chain is Agamous-like MADS-box protein AGL27 (AGL27), found in Arabidopsis thaliana (Mouse-ear cress).